The chain runs to 315 residues: Ankyrin repeat domain-containing protein EMB506, chloroplastic (315 aa).

The N-terminal 39 residues, 1–39 (MVSSVLSIPPQTCLLPRLPISDSVNCKSKIVYCLSTSVR), are a transit peptide targeting the chloroplast. Positions 44–65 (KRQSTARTRSFTETNRRTPSVQ) are enriched in polar residues. Residues 44–106 (KRQSTARTRS…DNESDWEDDS (63 aa)) form a disordered region. Residues 72–104 (EDPDDGSDSENEYEGEEEDGIGNDLDNESDWED) show a composition bias toward acidic residues. ANK repeat units follow at residues 151–180 (KSWK…DIDD), 184–213 (DNQT…NPHL), 217–246 (DGAA…DVNV), 250–279 (EGWT…DKTR), and 283–307 (DGKL…VKLL).

In terms of assembly, interacts with AKR. No homodimerization observed. In terms of tissue distribution, expressed in roots, inflorescence stems, flowers, siliques, dry seeds and mature cauline leaves.

It localises to the plastid. It is found in the chloroplast. Involved in the initial differentiation of the proplastid during the embryo development. Also required for correct cotyledon, true leaf and cauline leaf margin development. The sequence is that of Ankyrin repeat domain-containing protein EMB506, chloroplastic (EMB506) from Arabidopsis thaliana (Mouse-ear cress).